Reading from the N-terminus, the 189-residue chain is uncharacterized protein (189 aa).

This is an uncharacterized protein from Aquifex aeolicus (strain VF5).